A 68-amino-acid chain; its full sequence is Galectin-10 (68 aa).

The Galectin domain maps to 1–68; sequence EPYLQVDFHT…LSISVLPDKY (68 aa).

In terms of assembly, interacts with CEL.

It is found in the cytoplasm. Its subcellular location is the cytosol. The protein localises to the cytoplasmic granule. Its function is as follows. Regulates immune responses through the recognition of cell-surface glycans. Essential for the anergy and suppressive function of CD25-positive regulatory T-cells (Treg). This is Galectin-10 (CLC) from Pongo pygmaeus (Bornean orangutan).